We begin with the raw amino-acid sequence, 511 residues long: Sphingosine-1-phosphate transporter MFSD2B (511 aa).

A run of 9 helical transmembrane segments spans residues Met-108–Val-128, Val-136–Pro-156, Ile-236–Val-256, Thr-280–Val-300, Asn-323–Leu-343, Leu-357–Val-377, Val-379–Val-399, Ala-415–Ile-435, and Leu-462–Tyr-482.

Belongs to the major facilitator superfamily.

The protein localises to the cell membrane. It catalyses the reaction sphing-4-enine 1-phosphate(in) = sphing-4-enine 1-phosphate(out). The catalysed reaction is sphinganine 1-phosphate(in) = sphinganine 1-phosphate(out). The enzyme catalyses sphinga-4E,14Z-dienine-1-phosphate(in) = sphinga-4E,14Z-dienine-1-phosphate(out). In terms of biological role, lipid transporter that specifically mediates export of sphingosine-1-phosphate in red blood cells and platelets. Sphingosine-1-phosphate is a signaling sphingolipid and its export from red blood cells into in the plasma is required for red blood cell morphology. Sphingosine-1-phosphate export from platelets is required for platelet aggregation and thrombus formation. In addition to export, also able to mediate S1P import. The sequence is that of Sphingosine-1-phosphate transporter MFSD2B from Xenopus tropicalis (Western clawed frog).